Reading from the N-terminus, the 48-residue chain is Large ribosomal subunit protein bL33A (48 aa).

This sequence belongs to the bacterial ribosomal protein bL33 family.

In Bacillus anthracis, this protein is Large ribosomal subunit protein bL33A.